We begin with the raw amino-acid sequence, 81 residues long: Large ribosomal subunit protein bL31B (81 aa).

Belongs to the bacterial ribosomal protein bL31 family. Type B subfamily. In terms of assembly, part of the 50S ribosomal subunit.

This Borreliella burgdorferi (strain ATCC 35210 / DSM 4680 / CIP 102532 / B31) (Borrelia burgdorferi) protein is Large ribosomal subunit protein bL31B.